The chain runs to 353 residues: UPF0283 membrane protein YcjF (353 aa).

Transmembrane regions (helical) follow at residues 70–90 (MVMG…VQWT), 100–120 (VALG…GSVV), and 213–233 (ESTL…FIAW).

It belongs to the UPF0283 family.

It localises to the cell inner membrane. The polypeptide is UPF0283 membrane protein YcjF (Shigella boydii serotype 4 (strain Sb227)).